We begin with the raw amino-acid sequence, 440 residues long: Trigger factor (440 aa).

The 86-residue stretch at 163 to 248 folds into the PPIase FKBP-type domain; it reads GDGVTVDFEG…VKKIESAHLP (86 aa).

The protein belongs to the FKBP-type PPIase family. Tig subfamily.

It is found in the cytoplasm. It catalyses the reaction [protein]-peptidylproline (omega=180) = [protein]-peptidylproline (omega=0). In terms of biological role, involved in protein export. Acts as a chaperone by maintaining the newly synthesized protein in an open conformation. Functions as a peptidyl-prolyl cis-trans isomerase. The protein is Trigger factor of Verminephrobacter eiseniae (strain EF01-2).